The following is a 214-amino-acid chain: Adenylate kinase (214 aa).

ATP is bound at residue 10-15; it reads GAGKGT. The NMP stretch occupies residues 30–59; that stretch reads STGDMLRAAVKAGTPLGLEAKKVMDAGQLV. AMP is bound by residues Thr-31, Arg-36, 57–59, 85–88, and Gln-92; these read QLV and GFPR. The interval 122 to 159 is LID; that stretch reads GRRVHPGSGRVYHVVFNPPKVEGKDDVTGEDLAIRPDD. Residues Arg-123 and 132 to 133 contribute to the ATP site; that span reads VY. Residues Arg-156 and Arg-167 each coordinate AMP. Gln-200 contributes to the ATP binding site.

This sequence belongs to the adenylate kinase family. In terms of assembly, monomer.

Its subcellular location is the cytoplasm. The enzyme catalyses AMP + ATP = 2 ADP. Its pathway is purine metabolism; AMP biosynthesis via salvage pathway; AMP from ADP: step 1/1. Functionally, catalyzes the reversible transfer of the terminal phosphate group between ATP and AMP. Plays an important role in cellular energy homeostasis and in adenine nucleotide metabolism. The sequence is that of Adenylate kinase from Shewanella putrefaciens (strain CN-32 / ATCC BAA-453).